Consider the following 250-residue polypeptide: Probable transcriptional regulatory protein Nther_1800 (250 aa).

Belongs to the TACO1 family.

It is found in the cytoplasm. The chain is Probable transcriptional regulatory protein Nther_1800 from Natranaerobius thermophilus (strain ATCC BAA-1301 / DSM 18059 / JW/NM-WN-LF).